We begin with the raw amino-acid sequence, 408 residues long: Na(+)/H(+) antiporter NhaA 2 (408 aa).

Helical transmembrane passes span 36–56, 79–99, 115–135, 145–165, 174–194, 197–217, 225–245, 281–301, 310–330, 348–368, and 381–401; these read GILL…GLGV, ILLW…GLEI, ALPV…YFLF, GWGI…SLLG, IFLA…IAVF, SELH…LMVF, LFFY…SGIH, FIIM…SEML, LGII…MSWL, VLGL…IALL, and FAIL…LSSY.

Belongs to the NhaA Na(+)/H(+) (TC 2.A.33) antiporter family.

The protein localises to the cell inner membrane. It carries out the reaction Na(+)(in) + 2 H(+)(out) = Na(+)(out) + 2 H(+)(in). Its function is as follows. Na(+)/H(+) antiporter that extrudes sodium in exchange for external protons. The polypeptide is Na(+)/H(+) antiporter NhaA 2 (Flavobacterium johnsoniae (strain ATCC 17061 / DSM 2064 / JCM 8514 / BCRC 14874 / CCUG 350202 / NBRC 14942 / NCIMB 11054 / UW101) (Cytophaga johnsonae)).